The sequence spans 84 residues: U21-theraphotoxin-Cg1a 1 (84 aa).

Residues 1–21 (MKVSVLITLAVLGVMFLLTSA) form the signal peptide. The propeptide occupies 22-47 (EERGSDQMDSPAWLKSMEIIFQSEER). Cystine bridges form between Cys49/Cys63, Cys56/Cys68, and Cys62/Cys76. Val82 carries the post-translational modification Valine amide.

Belongs to the neurotoxin 10 (Hwtx-1) family. 05 (F4a) subfamily. In terms of tissue distribution, expressed by the venom gland.

It localises to the secreted. Functionally, probable ion channel inhibitor. The polypeptide is U21-theraphotoxin-Cg1a 1 (Chilobrachys guangxiensis (Chinese earth tiger tarantula)).